Here is a 481-residue protein sequence, read N- to C-terminus: Transcription factor TGA9 (481 aa).

Positions 91 to 181 are disordered; sequence QTLPTESSKS…GKQLDAKTLR (91 aa). Over residues 97 to 109 the composition is skewed to low complexity; the sequence is SSKSGGESSDSGS. Polar residues predominate over residues 110–126; the sequence is ANFSGKAESQQPESPMS. Low complexity predominate over residues 143–155; the sequence is SSSTSGLPSTSRT. The Nuclear localization signal signature appears at 165–172; sequence KRKATTSG. The bZIP domain maps to 176–220; sequence DAKTLRRLAQNREAARKSRLRKKAYVQQLESSRIKLSQLEQELQR. The interval 178-198 is basic motif; the sequence is KTLRRLAQNREAARKSRLRKK. A leucine-zipper region spans residues 204 to 218; it reads LESSRIKLSQLEQEL. The region spanning 242-450 is the DOG1 domain; that stretch reads AAIFDMEYGR…RALSSLWLSR (209 aa).

The protein belongs to the bZIP family. As to quaternary structure, homodimer. Binds DNA as a dimer. Interacts with floral glutaredoxins GRXC7/ROXY1 and GRXC8/ROXY2 in the nucleus. Interacts with TGA1, TGA2, TGA3, TGA4, TGA5, TGA6, TGA7, TGA10 and PAN. In terms of tissue distribution, mostly expressed in stems, inflorescence apex and flowers, and, to a lower extent, in seedlings, leaves and siliques.

The protein resides in the nucleus. Together with TGA10, basic leucine-zipper transcription factor required for anther development, probably via the activation of SPL expression in anthers and via the regulation of genes with functions in early and middle tapetal development. Required for signaling responses to pathogen-associated molecular patterns (PAMPs) such as flg22 that involves chloroplastic reactive oxygen species (ROS) production and subsequent expression of H(2)O(2)-responsive genes. The sequence is that of Transcription factor TGA9 from Arabidopsis thaliana (Mouse-ear cress).